Reading from the N-terminus, the 405-residue chain is Elongation factor Tu (405 aa).

The tr-type G domain occupies 10–213 (KEHVNVGTIG…AMDEYIPTPE (204 aa)). Residues 19–26 (GHVDHGKS) form a G1 region. GTP is bound at residue 19–26 (GHVDHGKS). Ser26 is a binding site for Mg(2+). Residues 64–68 (GITIN) form a G2 region. Positions 85 to 88 (DCPG) are G3. Residues 85–89 (DCPGH) and 140–143 (NKCD) each bind GTP. A G4 region spans residues 140–143 (NKCD). The G5 stretch occupies residues 178-180 (SAL).

It belongs to the TRAFAC class translation factor GTPase superfamily. Classic translation factor GTPase family. EF-Tu/EF-1A subfamily. Monomer.

The protein resides in the cytoplasm. It catalyses the reaction GTP + H2O = GDP + phosphate + H(+). In terms of biological role, GTP hydrolase that promotes the GTP-dependent binding of aminoacyl-tRNA to the A-site of ribosomes during protein biosynthesis. The polypeptide is Elongation factor Tu (Aquifex pyrophilus).